The sequence spans 633 residues: Transcriptional repressor p66-alpha (633 aa).

The segment covering 1 to 18 has biased composition (basic and acidic residues); it reads MTEEACRTRSQKRALERD. Disordered stretches follow at residues 1–59 and 73–119; these read MTEE…PTQG and RGEG…RVNG. Residues T20 and T49 each carry the phosphothreonine modification. Residues 86 to 99 are compositionally biased toward basic and acidic residues; that stretch reads RTSHSDMKSERRPP. K93 participates in a covalent cross-link: Glycyl lysine isopeptide (Lys-Gly) (interchain with G-Cter in SUMO2). S100, S107, S113, S114, and S137 each carry phosphoserine. Residues 108–119 show a composition bias toward polar residues; that stretch reads DNEQPSSPRVNG. Residues 139–174 are a coiled coil; it reads EERERMIKQLKEELRLEEAKLVLLKKLRQSQIQKEA. A CR1; interaction with HDAC1, HDAC2, MBD2 and MTA2 region spans residues 144–178; that stretch reads MIKQLKEELRLEEAKLVLLKKLRQSQIQKEATAQK. The segment covering 172–188 has biased composition (polar residues); it reads KEATAQKPTGSVGSTVT. A disordered region spans residues 172–238; that stretch reads KEATAQKPTG…QASSKLGPQA (67 aa). K178 participates in a covalent cross-link: Glycyl lysine isopeptide (Lys-Gly) (interchain with G-Cter in SUMO2). The segment at 181–295 is interaction with ZMYND8; the sequence is GSVGSTVTTP…IIQQGLIRVA (115 aa). T189 bears the Phosphothreonine mark. The span at 196-212 shows a compositional bias: polar residues; sequence GTQNIPAGKPSLQTSSA. Residue K204 forms a Glycyl lysine isopeptide (Lys-Gly) (interchain with G-Cter in SUMO2) linkage. Omega-N-methylarginine is present on R225. The segment covering 228–238 has biased composition (polar residues); it reads QQASSKLGPQA. A Glycyl lysine isopeptide (Lys-Gly) (interchain with G-Cter in SUMO2) cross-link involves residue K233. R249, R258, and R273 each carry omega-N-methylarginine. Phosphoserine is present on S275. The residue at position 285 (R285) is an Omega-N-methylarginine. 2 positions are modified to phosphoserine: S340 and S343. The CR2; histone tail-binding and interaction with CHD4 and CDK2AP1 stretch occupies residues 340–480; sequence SPASRQAAAK…EIEQRLLQQG (141 aa). Residues 411–464 form a GATA-type zinc finger; the sequence is SREPYMCAQCKTDFTCRWREEKSGAIMCENCMTTNQKKALKVEHTSRLKAAFVK. Glycyl lysine isopeptide (Lys-Gly) (interchain with G-Cter in SUMO2) cross-links involve residues K464 and K487. S512 bears the Phosphoserine mark. The residue at position 539 (R539) is an Asymmetric dimethylarginine; alternate. Omega-N-methylarginine; alternate is present on R539. Phosphoserine is present on residues S546 and S548. A Glycyl lysine isopeptide (Lys-Gly) (interchain with G-Cter in SUMO2) cross-link involves residue K550. S556 carries the phosphoserine modification. Residues 561-585 are disordered; it reads VSRTGRHSERTVSAGKGSATSNWKK. A Glycyl lysine isopeptide (Lys-Gly) (interchain with G-Cter in SUMO2) cross-link involves residue K585. Phosphoserine is present on S598. Residue K605 forms a Glycyl lysine isopeptide (Lys-Gly) (interchain with G-Cter in SUMO2) linkage.

In terms of assembly, homooligomer. Component of the nucleosome remodeling and deacetylase (NuRD) repressor complex, composed of core proteins MTA1, MTA2, MTA3, RBBP4, RBBP7, HDAC1, HDAC2, MBD2, MBD3, and peripherally associated proteins CDK2AP1, CDK2AP2, GATAD2A, GATAD2B, CHD3, CHD4 and CHD5. The exact stoichiometry of the NuRD complex is unknown, and some subunits such as MBD2 and MBD3, GATAD2A and GATAD2B, and CHD3, CHD4 and CHD5 define mutually exclusive NuRD complexes. Component of the MeCP1 histone deacetylase complex. Interacts with CDK2AP1. Interacts with CHD4. Interacts with ERCC6. Interacts with HDAC1. Interacts with HDAC2. Interacts with MBD2; this interaction is required for the enhancement of MBD2-mediated repression and for targeting to the chromatin. Interacts with MBD3. Interacts with MTA2. Interacts with ZMYND8. Interacts with histone tails, including that of histones H2A, H2B, H3 and H4, the interaction is reduced by histone acetylation. Ubiquitous, both in fetal and adult tissues.

It localises to the nucleus speckle. The protein resides in the nucleus. The protein localises to the chromosome. Its function is as follows. Transcriptional repressor. Acts as a component of the histone deacetylase NuRD complex which participates in the remodeling of chromatin. Enhances MBD2-mediated repression. Efficient repression requires the presence of GATAD2B. The protein is Transcriptional repressor p66-alpha (GATAD2A) of Homo sapiens (Human).